A 171-amino-acid chain; its full sequence is Ribosome maturation factor RimM (171 aa).

In terms of domain architecture, PRC barrel spans 97–169 (DGEFYYHEII…RVDVDIMEGL (73 aa)).

This sequence belongs to the RimM family. Binds ribosomal protein uS19.

Its subcellular location is the cytoplasm. Functionally, an accessory protein needed during the final step in the assembly of 30S ribosomal subunit, possibly for assembly of the head region. Essential for efficient processing of 16S rRNA. May be needed both before and after RbfA during the maturation of 16S rRNA. It has affinity for free ribosomal 30S subunits but not for 70S ribosomes. The sequence is that of Ribosome maturation factor RimM from Lactococcus lactis subsp. cremoris (strain MG1363).